The primary structure comprises 139 residues: Large-conductance mechanosensitive channel (139 aa).

Transmembrane regions (helical) follow at residues 14 to 34 (VVDM…VKSL) and 86 to 106 (GLFI…FLLI).

This sequence belongs to the MscL family. In terms of assembly, homopentamer.

The protein localises to the cell inner membrane. Its function is as follows. Channel that opens in response to stretch forces in the membrane lipid bilayer. May participate in the regulation of osmotic pressure changes within the cell. In Methylobacillus flagellatus (strain ATCC 51484 / DSM 6875 / VKM B-1610 / KT), this protein is Large-conductance mechanosensitive channel.